The following is a 266-amino-acid chain: Cell division cycle-associated protein 3 (266 aa).

The segment at 1 to 84 (MGSTQSVSGT…TPMKISGPDP (84 aa)) is disordered. Phosphoserine is present on residues Ser29 and Ser31. Positions 32 to 46 (AGIQRTPIQVESSPQ) are enriched in polar residues. Thr37 bears the Phosphothreonine mark. Phosphoserine occurs at positions 44 and 67. At Thr75 the chain carries Phosphothreonine. Positions 90–119 (KELSEVLETEASESISSPELALPRETPLFY) are F-box-like. Residue Ser93 is modified to Phosphoserine. Disordered stretches follow at residues 120-225 (DLDL…LSEN) and 242-266 (KAGG…LLES). Basic and acidic residues predominate over residues 143-156 (LDPKQVFTKEEAKQ). Over residues 157–168 (SAETIAASQNSD) the composition is skewed to polar residues. The residue at position 197 (Ser197) is a Phosphoserine. Residue Thr200 is modified to Phosphothreonine. The segment covering 203–213 (QDDNSPGTLTL) has biased composition (polar residues). Ser207 is subject to Phosphoserine. Residue Thr210 is modified to Phosphothreonine. The segment covering 250-259 (PNQDHDKENQ) has biased composition (basic and acidic residues). The short motif at 256 to 258 (KEN) is the KEN box element.

Interacts with SKP1. Part of a SCF (SKP1-cullin-F-box) protein ligase complex. In terms of processing, ubiquitinated and degraded by the APC/C-Cdh1 complex.

Its subcellular location is the cytoplasm. The protein localises to the cytosol. It participates in protein modification; protein ubiquitination. In terms of biological role, F-box-like protein which is required for entry into mitosis. Acts by participating in E3 ligase complexes that mediate the ubiquitination and degradation of WEE1 kinase at G2/M phase. The chain is Cell division cycle-associated protein 3 (Cdca3) from Mus musculus (Mouse).